A 1062-amino-acid polypeptide reads, in one-letter code: Cell division control protein 7 (1062 aa).

Residues 9–259 form the Protein kinase domain; that stretch reads ITLGDCLGKG…TRKLLKHPWV (251 aa). ATP is bound by residues 15 to 23 and K38; that span reads LGKGAFGAV. Catalysis depends on D131, which acts as the Proton acceptor. 2 stretches are compositionally biased toward polar residues: residues 296–310 and 376–394; these read NRIN…QSSY and AFNS…SPLS. Disordered stretches follow at residues 296 to 331, 361 to 394, and 1038 to 1062; these read NRIN…NWDN, NNSS…SPLS, and NEHK…PLTQ.

This sequence belongs to the protein kinase superfamily. Ser/Thr protein kinase family. CDC7 subfamily. Interacts with spg1. Seems to interact with cdc11. Mg(2+) is required as a cofactor.

The catalysed reaction is L-seryl-[protein] + ATP = O-phospho-L-seryl-[protein] + ADP + H(+). It catalyses the reaction L-threonyl-[protein] + ATP = O-phospho-L-threonyl-[protein] + ADP + H(+). Functionally, protein kinase essential for cell division. Plays a key role in initiation of septum formation and cytokinesis. In Schizosaccharomyces pombe (strain 972 / ATCC 24843) (Fission yeast), this protein is Cell division control protein 7 (cdc7).